A 775-amino-acid chain; its full sequence is Ribonucleoside-diphosphate reductase large subunit (775 aa).

Substrate is bound by residues T200, 215–216 (SC), G246, 427–431 (NLCTE), and 606–610 (PTVSS). C216 and C444 are disulfide-bonded. The active-site Proton acceptor is the N427. C429 (cysteine radical intermediate) is an active-site residue. The active-site Proton acceptor is the E431.

The protein belongs to the ribonucleoside diphosphate reductase large chain family. In terms of assembly, heterotetramer composed of a homodimer of the large subunit (R1) and a homodimer of the small subunit (R2). Larger multisubunit protein complex are also active, composed of (R1)n(R2)n.

The catalysed reaction is a 2'-deoxyribonucleoside 5'-diphosphate + [thioredoxin]-disulfide + H2O = a ribonucleoside 5'-diphosphate + [thioredoxin]-dithiol. Its function is as follows. Ribonucleoside-diphosphate reductase holoenzyme provides the precursors necessary for viral DNA synthesis. Allows virus growth in non-dividing cells, as well as reactivation from latency in infected hosts. Catalyzes the biosynthesis of deoxyribonucleotides from the corresponding ribonucleotides. The polypeptide is Ribonucleoside-diphosphate reductase large subunit (Homo sapiens (Human)).